Consider the following 310-residue polypeptide: uncharacterized protein (310 aa).

This is an uncharacterized protein from Acanthamoeba polyphaga (Amoeba).